Here is a 510-residue protein sequence, read N- to C-terminus: Glycogen synthase (510 aa).

K18 is an ADP-alpha-D-glucose binding site.

It belongs to the glycosyltransferase 1 family. Bacterial/plant glycogen synthase subfamily.

The enzyme catalyses [(1-&gt;4)-alpha-D-glucosyl](n) + ADP-alpha-D-glucose = [(1-&gt;4)-alpha-D-glucosyl](n+1) + ADP + H(+). Its pathway is glycan biosynthesis; glycogen biosynthesis. Its function is as follows. Synthesizes alpha-1,4-glucan chains using ADP-glucose. This is Glycogen synthase from Bordetella parapertussis (strain 12822 / ATCC BAA-587 / NCTC 13253).